A 397-amino-acid chain; its full sequence is GTPase Obg (397 aa).

An Obg domain is found at 1-159 (MKFVDEATII…RNLRLELKVL (159 aa)). Residues 128-148 (TRFKSSVNRAPRQTSKGSEGE) are disordered. A compositionally biased stretch (polar residues) spans 129-144 (RFKSSVNRAPRQTSKG). The region spanning 160–333 (ADVGLLGLPN…LVQAVMRWIE (174 aa)) is the OBG-type G domain. Residues 166–173 (GLPNAGKS), 191–195 (FTTLV), 213–216 (DIPG), 283–286 (NKVD), and 314–316 (SAL) contribute to the GTP site. Positions 173 and 193 each coordinate Mg(2+). The segment covering 336–347 (AEQEADNPDFAE) has biased composition (acidic residues). A disordered region spans residues 336–397 (AEQEADNPDF…YDVEVVYAPE (62 aa)). Over residues 349 to 370 (EAARRRRMDEEARQKIEADRQA) the composition is skewed to basic and acidic residues. A compositionally biased stretch (acidic residues) spans 378–390 (DDDDDFDDDDYDV).

The protein belongs to the TRAFAC class OBG-HflX-like GTPase superfamily. OBG GTPase family. Monomer. The cofactor is Mg(2+).

The protein resides in the cytoplasm. Functionally, an essential GTPase which binds GTP, GDP and possibly (p)ppGpp with moderate affinity, with high nucleotide exchange rates and a fairly low GTP hydrolysis rate. Plays a role in control of the cell cycle, stress response, ribosome biogenesis and in those bacteria that undergo differentiation, in morphogenesis control. The protein is GTPase Obg of Marinobacter nauticus (strain ATCC 700491 / DSM 11845 / VT8) (Marinobacter aquaeolei).